The chain runs to 56 residues: MAAKGAREKIRLVSTAETGHFYTTDKNKRNMPEKMEIKKFDPVVRKHVIYKEAKIK.

Belongs to the bacterial ribosomal protein bL33 family.

The sequence is that of Large ribosomal subunit protein bL33 from Haemophilus influenzae (strain 86-028NP).